We begin with the raw amino-acid sequence, 520 residues long: Acetyltransferase MAT1 (520 aa).

Catalysis depends on proton acceptor residues His-183 and Asp-456.

It belongs to the plant acyltransferase family.

It functions in the pathway secondary metabolite biosynthesis. Its function is as follows. Acyl-CoA-dependent acyltransferase; part of the gene cluster that mediates the biosynthesis of mannosylerythritol lipids (MELs), surface-active substances that enhance the availability of water-insoluble substrates. Depending on the number of acetyl groups, mannosylerythritol lipids can be differentiated into MEL A (fully acetylated), MEL B and MEL C (monoacetylated at R-6 and R-4, respectively), and the fully deacetylated MEL D. The first step in the pathway is the generation of mannosylerythritol by the glycosyltransferase EMT1 which catalyzes the transfer of GDP-mannose to the C-4 atom of meso-erythritol. This reaction has to be stereospecific, since only mannosyl-D-erythritol is generated. The produced disaccharide is subsequently acylated with fatty acids of various lengths by the acyltransferases MAC1 and MAC2 at positions C-2 and C-3, repectively. The existence of MEL derivatives which carry an acetyl group at C-2 implies that at least MAC1 also accepts acetyl-CoA as a donor. The final step of MEL biosynthesis is the acetylation of the fully acylated mannosylerythritol lipids catalyzed by the acetyl-CoA-dependent acetyltransferase MAT1. MAT1 displays a relaxed regioselectivity and is able to transfer acetylgroups to both positions C-4 and C-6 of the mannosyl moiety. The polypeptide is Acetyltransferase MAT1 (Pseudozyma antarctica (strain T-34) (Yeast)).